We begin with the raw amino-acid sequence, 302 residues long: 1D-myo-inositol 2-acetamido-2-deoxy-alpha-D-glucopyranoside deacetylase (302 aa).

The Zn(2+) site is built by H13, D16, and H155.

The protein belongs to the MshB deacetylase family. It depends on Zn(2+) as a cofactor.

The enzyme catalyses 1D-myo-inositol 2-acetamido-2-deoxy-alpha-D-glucopyranoside + H2O = 1D-myo-inositol 2-amino-2-deoxy-alpha-D-glucopyranoside + acetate. Functionally, catalyzes the deacetylation of 1D-myo-inositol 2-acetamido-2-deoxy-alpha-D-glucopyranoside (GlcNAc-Ins) in the mycothiol biosynthesis pathway. The protein is 1D-myo-inositol 2-acetamido-2-deoxy-alpha-D-glucopyranoside deacetylase of Nocardioides sp. (strain ATCC BAA-499 / JS614).